We begin with the raw amino-acid sequence, 255 residues long: Protein DAL82 (255 aa).

The interval 87 to 149 (PEHPRPRTKF…SQPLPLDSIT (63 aa)) is disordered. Residues 128-138 (PNNHSSDDEHS) show a composition bias toward basic and acidic residues.

Positive regulator of allophanate-induced genes in S.cerevisiae. The sequence is that of Protein DAL82 (DAL82) from Saccharomyces cerevisiae (strain ATCC 204508 / S288c) (Baker's yeast).